Reading from the N-terminus, the 213-residue chain is Adenylate kinase (213 aa).

10 to 15 (GSGKGS) is an ATP binding site. The interval 30 to 60 (STGNLFRAILKEDSELARKIKEINVSGGKLV) is NMP. AMP is bound by residues Thr31, Arg36, 58-60 (KLV), 87-90 (GYPR), and Gln94. The segment at 123 to 160 (GRWMCPKCAGIYNIHFKKPQVDGVCDNDQATLYQRADD) is LID. Arg124 lines the ATP pocket. Zn(2+) is bound by residues Cys127 and Cys130. Residue 133–134 (IY) coordinates ATP. Zn(2+)-binding residues include Cys147 and Asp150. AMP is bound by residues Arg157 and Arg168. Residue Gln196 participates in ATP binding.

The protein belongs to the adenylate kinase family. Monomer.

Its subcellular location is the cytoplasm. It carries out the reaction AMP + ATP = 2 ADP. It participates in purine metabolism; AMP biosynthesis via salvage pathway; AMP from ADP: step 1/1. Functionally, catalyzes the reversible transfer of the terminal phosphate group between ATP and AMP. Plays an important role in cellular energy homeostasis and in adenine nucleotide metabolism. This chain is Adenylate kinase, found in Ureaplasma urealyticum serovar 10 (strain ATCC 33699 / Western).